The chain runs to 247 residues: Cell division protein ZapD (247 aa).

The protein belongs to the ZapD family. In terms of assembly, interacts with FtsZ.

The protein localises to the cytoplasm. Functionally, cell division factor that enhances FtsZ-ring assembly. Directly interacts with FtsZ and promotes bundling of FtsZ protofilaments, with a reduction in FtsZ GTPase activity. The protein is Cell division protein ZapD of Salmonella arizonae (strain ATCC BAA-731 / CDC346-86 / RSK2980).